The primary structure comprises 396 residues: DNA excision repair protein ERCC-8 (396 aa).

WD repeat units follow at residues 33–73 (NKDR…LYDL), 88–129 (CSIG…VWDT), 133–173 (QTAD…LCDL), 177–216 (SCSH…LWDV), 235–274 (QAVE…LWNS), 281–321 (LVNY…VYTV), and 325–363 (EQIT…AWVP). The interval 371–396 (DDDETTTKSQLNPAFEDAWSSSDEEG) is disordered. Phosphoserine is present on residues serine 390, serine 391, and serine 392.

Part of the CSA complex (also named DCX(ERCC8) complex), a DCX E3 ubiquitin-protein ligase complex containing ERCC8, RBX1, DDB1 and CUL4A; the CSA complex interacts with RNA polymerase II; upon UV irradiation it interacts with the COP9 signalosome and preferentially with the hyperphosphorylated form of RNA polymerase II. Interacts with ERCC6/CSB (via CIM motif); promoting recruitment to lesion-stalled RNA polymerase II (Pol II). Interacts with KIAA1530/UVSSA. Interacts with a subunit of RNA polymerase II TFIIH.

The protein resides in the nucleus. It localises to the chromosome. It is found in the nucleus matrix. It functions in the pathway protein modification; protein ubiquitination. Substrate-recognition component of the CSA complex, a DCX (DDB1-CUL4-X-box) E3 ubiquitin-protein ligase complex, involved in transcription-coupled nucleotide excision repair (TC-NER), a process during which RNA polymerase II-blocking lesions are rapidly removed from the transcribed strand of active genes. Following recruitment to lesion-stalled RNA polymerase II (Pol II), the CSA complex mediates ubiquitination of Pol II subunit POLR2A/RPB1 at 'Lys-1268', a critical TC-NER checkpoint, governing RNA Pol II stability and initiating DNA damage excision by TFIIH recruitment. The CSA complex also promotes the ubiquitination and subsequent proteasomal degradation of ERCC6/CSB in a UV-dependent manner; ERCC6 degradation is essential for the recovery of RNA synthesis after transcription-coupled repair. Also plays a role in DNA double-strand breaks (DSSBs) repair by non-homologous end joining (NHEJ). This is DNA excision repair protein ERCC-8 from Homo sapiens (Human).